We begin with the raw amino-acid sequence, 174 residues long: Gamma-crystallin S (174 aa).

Beta/gamma crystallin 'Greek key' domains follow at residues 2 to 40 (GRII…RVES) and 41 to 83 (GAWV…KMIH). Residues 84-89 (FVSGSE) form a connecting peptide region. 2 consecutive Beta/gamma crystallin 'Greek key' domains span residues 90 to 130 (YKIQ…KVLD) and 131 to 173 (GIWI…KRLM).

Belongs to the beta/gamma-crystallin family.

Crystallins are the dominant structural components of the vertebrate eye lens. This is Gamma-crystallin S (crygs) from Cyprinus carpio (Common carp).